The following is a 373-amino-acid chain: Flagellar P-ring protein (373 aa).

The first 26 residues, 1 to 26 (MRLLFRFLTLVAVLAMSLADVAPAWA), serve as a signal peptide directing secretion.

It belongs to the FlgI family. The basal body constitutes a major portion of the flagellar organelle and consists of four rings (L,P,S, and M) mounted on a central rod.

The protein localises to the periplasm. Its subcellular location is the bacterial flagellum basal body. In terms of biological role, assembles around the rod to form the L-ring and probably protects the motor/basal body from shearing forces during rotation. In Rhizobium etli (strain CIAT 652), this protein is Flagellar P-ring protein.